A 298-amino-acid polypeptide reads, in one-letter code: Protoheme IX farnesyltransferase (298 aa).

The next 9 helical transmembrane spans lie at 29 to 49, 51 to 71, 97 to 117, 120 to 140, 148 to 168, 175 to 195, 221 to 241, 243 to 263, and 278 to 298; these read LIVF…PPLL, FGVA…LNCL, ETVT…HGFI, LTMW…TLIL, IVIG…AMTG, LVLF…LACY, ILWY…LGMS, GFYL…AIAL, and YSIL…LIVL.

This sequence belongs to the UbiA prenyltransferase family. Protoheme IX farnesyltransferase subfamily.

It is found in the cell inner membrane. It carries out the reaction heme b + (2E,6E)-farnesyl diphosphate + H2O = Fe(II)-heme o + diphosphate. It participates in porphyrin-containing compound metabolism; heme O biosynthesis; heme O from protoheme: step 1/1. Its function is as follows. Converts heme B (protoheme IX) to heme O by substitution of the vinyl group on carbon 2 of heme B porphyrin ring with a hydroxyethyl farnesyl side group. In Dechloromonas aromatica (strain RCB), this protein is Protoheme IX farnesyltransferase.